A 193-amino-acid polypeptide reads, in one-letter code: Naphthalene 1,2-dioxygenase system, small oxygenase component (193 aa).

It belongs to the bacterial ring-hydroxylating dioxygenase beta subunit family. The naphthalene dioxygenase (NDO) multicomponent enzyme system is composed of an electron transfer component and a dioxygenase component (iron sulfur protein (ISP)). The electron transfer component is composed of a ferredoxin reductase (NdoR) and a ferredoxin (NdoA), and the dioxygenase component is formed of a heterohexamer (trimer of heterodimers) of three large alpha subunits (NdoB) and three small beta subunits (NdoC).

Its pathway is aromatic compound metabolism; naphthalene degradation. Functionally, component of the naphthalene dioxygenase (NDO) multicomponent enzyme system which catalyzes the incorporation of both atoms of molecular oxygen into naphthalene to form cis-(1R,2S)-dihydroxy-1,2-dihydronaphthalene. The beta subunit seems to have a structural role in the holoenzyme. This Pseudomonas aeruginosa protein is Naphthalene 1,2-dioxygenase system, small oxygenase component.